A 217-amino-acid chain; its full sequence is Translation initiation factor IF-3 (217 aa).

Residues 185-217 (YNLPETETTRIREENREKQKEKENTSKEGNKDA) form a disordered region. Over residues 191–217 (ETTRIREENREKQKEKENTSKEGNKDA) the composition is skewed to basic and acidic residues.

It belongs to the IF-3 family. Monomer.

The protein localises to the cytoplasm. Functionally, IF-3 binds to the 30S ribosomal subunit and shifts the equilibrium between 70S ribosomes and their 50S and 30S subunits in favor of the free subunits, thus enhancing the availability of 30S subunits on which protein synthesis initiation begins. This chain is Translation initiation factor IF-3, found in Methylacidiphilum infernorum (isolate V4) (Methylokorus infernorum (strain V4)).